Here is a 2474-residue protein sequence, read N- to C-terminus: Serine/threonine-protein kinase TOR2 (2474 aa).

The interval methionine 1–isoleucine 62 is disordered. Position 10 is a phosphothreonine (threonine 10). The segment covering histidine 25–histidine 36 has biased composition (basic residues). A compositionally biased stretch (polar residues) spans serine 43–asparagine 56. 11 HEAT repeats span residues tyrosine 588–isoleucine 626, histidine 636–alanine 674, proline 676–alanine 710, proline 756–lysine 793, arginine 797–tyrosine 835, leucine 841–tyrosine 879, tyrosine 917–leucine 955, arginine 1039–asparagine 1076, aspartate 1079–leucine 1116, glutamate 1118–threonine 1155, and serine 1292–proline 1331. Residues threonine 1338–serine 1922 form the FAT domain. Residues phenylalanine 2097–arginine 2421 enclose the PI3K/PI4K catalytic domain. A G-loop region spans residues valine 2103–arginine 2109. The catalytic loop stretch occupies residues glycine 2276–asparagine 2284. The activation loop stretch occupies residues histidine 2296 to threonine 2321. Residues asparagine 2442 to tryptophan 2474 form the FATC domain.

The protein belongs to the PI3/PI4-kinase family. As to quaternary structure, the target of rapamycin complex 1 (TORC1) is composed of at least KOG1, LST8, TCO89 and either TOR1 (TORC1-A) or TOR2 (TORC1-B). TORC1 binds to and is inhibited by FKBP-rapamycin. Interacts with PIB2; following activation of PIB2 by glutamine. The target of rapamycin complex 2 (TORC2) is composed of at least AVO1, AVO2, BIT61, LST8, TOR2 and TSC11. TORC2 forms a homodimer. Contrary to TORC1, TORC2 does not bind to and is not sensitive to FKBP-rapamycin. Interacts with SLM1 and SLM2.

It is found in the cell membrane. The protein resides in the vacuole membrane. The enzyme catalyses L-seryl-[protein] + ATP = O-phospho-L-seryl-[protein] + ADP + H(+). The catalysed reaction is L-threonyl-[protein] + ATP = O-phospho-L-threonyl-[protein] + ADP + H(+). It catalyses the reaction a 1,2-diacyl-sn-glycero-3-phospho-(1D-myo-inositol) + ATP = a 1,2-diacyl-sn-glycero-3-phospho-(1D-myo-inositol 4-phosphate) + ADP + H(+). Functionally, phosphatidylinositol 3-kinase homolog, component of both TORC1 and TORC2. TORC1 regulates multiple cellular processes to control cell growth in response to environmental signals. Nutrient limitation and environmental stress signals cause inactivation of TORC1. Active TORC1 positively controls ribosome biogenesis via control of rRNA, ribosomal protein and tRNA gene expression, and rRNA processing. TORC1 positively controls protein biosynthesis by regulation of mRNA stability, translation initiation factor activity, and high-affinity amino acid permeases that serve to provide amino acids for use by the translation machinery. TORC1 also promotes growth by sequestering a number of nutrient and general stress-responsive transcription factors in the cytoplasm. TORC1 negatively controls macroautophagy, a process to recycle surplus cytoplasmic mass under nutrient starvation conditions. TORC1 controls many of these processes via TIP41-TAP42-mediated inhibition of the type 2A-related phosphatases PP2A and SIT4. In nutrient-rich conditions, responsible for the phosphorylation of AGC S6 kinase (S6K) YPK3, activating YPK3 kinase activity and promoting phosphorylation of ribosomal protein S6. Phosphorylates kinase SCH9 at 6 amino acids in the C-terminus, activating SCH9 kinase activity to properly regulate ribosome biogenesis, translation initiation, and entry into stationary phase. TORC2 regulates cell cycle-dependent polarization of the actin-cytoskeleton, cell wall integrity, and receptor endocytosis. TORC2 controls polarity of the actin cytoskeleton, which is required for orienting the secretory pathway toward discrete growth sites, via the RHO1/PKC1/MAPK cell integrity pathway by activating the RHO1 guanine nucleotide exchange factor ROM2. TORC2 phosphorylates the AGC kinase YPK2, an upstream effector of the cell integrity pathway. TORC2 negatively regulates calcineurin-dependent stress signaling via phosphorylation of its effector SLM1-SLM2. In Saccharomyces cerevisiae (strain ATCC 204508 / S288c) (Baker's yeast), this protein is Serine/threonine-protein kinase TOR2 (TOR2).